Consider the following 881-residue polypeptide: Rho GTPase-activating protein 17 (881 aa).

In terms of domain architecture, BAR spans 14 to 246; the sequence is QTVGRAEKTE…MRAHQDKWAE (233 aa). Residues 252–442 form the Rho-GAP domain; the sequence is TPLEEHLKRS…PIIQHADWFF (191 aa). Positions 459–475 are enriched in polar residues; it reads TPSSNHSFHTGNDSDSG. The interval 459–482 is disordered; that stretch reads TPSSNHSFHTGNDSDSGTLERKRP. A phosphoserine mark is found at Ser-484 and Ser-575. Positions 511–881 are disordered; that stretch reads GGTLNRKHIS…IDNDTESTAL (371 aa). Positions 592 to 617 are enriched in polar residues; that stretch reads RNNSQIASGQNQPQAAAGSHQLSMGQ. The span at 637 to 650 shows a compositional bias: pro residues; the sequence is APAPPKPGNPPPGH. Over residues 653–664 the composition is skewed to low complexity; the sequence is GQSSSGTSQHPP. Residues 665–678 show a composition bias toward pro residues; sequence SLSPKPPTRSPSPP. Phosphothreonine is present on residues Thr-679 and Thr-682. Residues 679 to 698 show a composition bias toward low complexity; the sequence is TQHTGQPPGQPSAPSQLSAP. Phosphoserine is present on residues Ser-702 and Ser-704. Composition is skewed to pro residues over residues 712–721, 752–764, and 806–816; these read NHPPPQPPTQ, HTPP…PSTP, and RPSVPPPPQPP. A phosphothreonine mark is found at Thr-753, Thr-757, and Thr-759. An SH3-binding motif is present at residues 753–766; the sequence is TPPQTPTPPSTPPL. A Phosphoserine modification is found at Ser-762. The residue at position 763 (Thr-763) is a Phosphothreonine. Residues 822–844 are compositionally biased toward polar residues; it reads GDSSLTNTAPTASKIVTDSNSRV. Positions 845 to 865 are enriched in basic and acidic residues; sequence SEPHRSIFPEMHSDSASKDVP. Acidic residues predominate over residues 872-881; it reads IDNDTESTAL.

Component of a complex whose core is composed of ARHGAP17, AMOT, PALS1, PATJ and PARD3/PAR3. Interacts with NHERF1, FNBP1, TRIP10, CAPZA (CAPZA1, CAPZA2 or CAPZA3), CAPZB, CD2AP and SH3KBP1/CIN85. Ubiquitously expressed. Expressed at higher level in heart and placenta.

It is found in the membrane. The protein resides in the cytoplasm. Its subcellular location is the cell junction. It localises to the tight junction. Its function is as follows. Rho GTPase-activating protein involved in the maintenance of tight junction by regulating the activity of CDC42, thereby playing a central role in apical polarity of epithelial cells. Specifically acts as a GTPase activator for the CDC42 GTPase by converting it to an inactive GDP-bound state. The complex formed with AMOT acts by regulating the uptake of polarity proteins at tight junctions, possibly by deciding whether tight junction transmembrane proteins are recycled back to the plasma membrane or sent elsewhere. Participates in the Ca(2+)-dependent regulation of exocytosis, possibly by catalyzing GTPase activity of Rho family proteins and by inducing the reorganization of the cortical actin filaments. Acts as a GTPase activator in vitro for RAC1. The chain is Rho GTPase-activating protein 17 (ARHGAP17) from Homo sapiens (Human).